An 877-amino-acid chain; its full sequence is Lipophilic envelope-spanning tunnel protein B (877 aa).

At 1–19 (MSQETPASTTEAQIKNKRR) the chain is on the cytoplasmic side. The chain crosses the membrane as a helical span at residues 20–40 (ISPFWLLPFIALMIASWLIWD). The Periplasmic portion of the chain corresponds to 41–877 (SYQDRGNTVT…WREWGTALPK (837 aa)). 7 MCE/MlaD regions span residues 46-149 (GNTV…VALD), 160-272 (DLMI…GLYE), 279-382 (RGVI…VVPG), 391-499 (DVLT…PLYA), 515-625 (TTVS…ILYA), 634-737 (GGQI…LQEA), and 746-862 (DGLS…LLQE).

The protein belongs to the PqiB family. In terms of assembly, homohexamer. May interact with LetA in the inner membrane. May also interact with partners in the outer membrane.

It is found in the cell inner membrane. Its function is as follows. Forms a tunnel that spans the entire periplasmic space. Is probably involved in the transport of lipids between the inner membrane and the outer membrane through the tunnel. Forms a dynamic tunnel sufficiently long to mediate lipid transport directly between the two membranes without the need for a shuttle protein. Binds phospholipids. Lipids bind inside the tunnel. Required for outer membrane homeostasis. Contributes to membrane integrity. This is Lipophilic envelope-spanning tunnel protein B from Escherichia coli (strain K12).